The following is a 1796-amino-acid chain: Non-reducing polyketide synthase nscA (1796 aa).

Residues 18-256 (DDLKDLFRRL…PLPVYDGLCH (239 aa)) are N-terminal acylcarrier protein transacylase domain (SAT). The 434-residue stretch at 392–825 (SSKLAIVGMA…GGNTTLLLED (434 aa)) folds into the Ketosynthase family 3 (KS3) domain. Active-site for beta-ketoacyl synthase activity residues include C565, H700, and H743. A malonyl-CoA:ACP transacylase (MAT) domain region spans residues 931 to 1251 (FTGQGAYYSG…SLVTLHLAGL (321 aa)). Positions 1317 to 1636 (TSLVHQITAE…RLLMDRFFSP (320 aa)) are product template (PT) domain. The segment at 1321–1457 (HQITAETVEA…ATVRFEDPVA (137 aa)) is N-terminal hotdog fold. In terms of domain architecture, PKS/mFAS DH spans 1321 to 1631 (HQITAETVEA…FRRVPRLLMD (311 aa)). Residue H1353 is the Proton acceptor; for dehydratase activity of the active site. The interval 1485 to 1631 (ASRLSKPLAY…FRRVPRLLMD (147 aa)) is C-terminal hotdog fold. Catalysis depends on D1542, which acts as the Proton donor; for dehydratase activity. The disordered stretch occupies residues 1688–1720 (TPESTPPLAPSSESSTPKESPIATPPESERADP). Residues 1697–1708 (PSSESSTPKESP) are compositionally biased toward low complexity. Residues 1719–1796 (DPMDNMVSQC…EMTAWIEEYC (78 aa)) form the Carrier domain. Residue S1756 is modified to O-(pantetheine 4'-phosphoryl)serine.

Pantetheine 4'-phosphate is required as a cofactor.

Its pathway is secondary metabolite biosynthesis. Its function is as follows. Non-reducing polyketide synthase; part of the gene cluster that mediates the biosynthesis of neosartoricin B, a prenylated anthracenone that probably exhibits T-cell antiproliferative activity, suggestive of a physiological role as an immunosuppressive agent. The non-reducing polyketide synthase nscA probably synthesizes and cyclizes the decaketide backbone. The hydrolase nscB then mediates the product release through hydrolysis followed by spontaneous decarboxylation. The prenyltransferase nscD catalyzes the addition of the dimethylallyl group to the aromatic C5. The FAD-dependent monooxygenase nscC is then responsible for the stereospecific hydroxylation at C2. Neosartoricin B can be converted into two additional compounds neosartoricins C and D. Neosartoricin C is a spirocyclic compound that is cyclized through the attack of C3 hydroxyl on C14, followed by dehydration. On the other hand, neosartoricin D is a further cyclized compound in which attack of C2 on C14 in neosartoricin C results in the formation of the acetal-containing dioxabicyclo-octanone ring. Both of these compounds are novel and possibly represent related metabolites of the gene cluster. In Arthroderma otae (strain ATCC MYA-4605 / CBS 113480) (Microsporum canis), this protein is Non-reducing polyketide synthase nscA.